Here is a 603-residue protein sequence, read N- to C-terminus: Probable HECT-type ubiquitin ligase-interacting protein creD (603 aa).

Disordered stretches follow at residues 375–398 (ELDP…GTLS) and 432–499 (LNIT…MATP). Residues 443–455 (TDHESQNDSEHRR) are compositionally biased toward basic and acidic residues. Positions 465-481 (PSSGSNSHSPSSPVLSR) are enriched in low complexity. Basic and acidic residues predominate over residues 482-492 (RPSDEVDHEHV).

Belongs to the arrestin family. As to quaternary structure, interacts with hulA.

Functionally, component of the regulatory network controlling carbon source utilization through ubiquitination and deubiquitination involving creA, creB, creC, creD and acrB. May be involved in signaling by recognizing appropriately phosphorylated substrates via its arrestin domains and then recruit a HECT-type ubiquitin ligase such as hulA, leading to ubiquitination of the substrate, providing a link between ubiquitination and phosphorylation in protein regulation and stability. The chain is Probable HECT-type ubiquitin ligase-interacting protein creD (creD) from Aspergillus flavus (strain ATCC 200026 / FGSC A1120 / IAM 13836 / NRRL 3357 / JCM 12722 / SRRC 167).